The chain runs to 481 residues: MANHRMSEATNHNHNHHLPYSLIHGLNNNHPSSGFINQDGSSSFDFGELEEAIVLQGVKYRNEEAKPPLLGGGGGATTLEMFPSWPIRTHQTLPTESSKSGGESSDSGSANFSGKAESQQPESPMSSKHHLMLQPHHNNMANSSSTSGLPSTSRTLAPPKPSEDKRKATTSGKQLDAKTLRRLAQNREAARKSRLRKKAYVQQLESSRIKLSQLEQELQRARSQGLFMGGCGPPGPNITSGAAIFDMEYGRWLEDDNRHMSEIRTGLQAHLSDNDLRLIVDGYIAHFDEIFRLKAVAAKADVFHLIIGTWMSPAERCFIWMAGFRPSDLIKILVSQMDLLTEQQLMGIYSLQHSSQQAEEALSQGLEQLQQSLIDTLAASPVIDGMQQMAVALGKISNLEGFIRQADNLRQQTVHQLRRILTVRQAARCFLVIGEYYGRLRALSSLWLSRPRETLMSDETSCQTTTDLQIVQSSRNHFSNF.

Positions 91–181 (QTLPTESSKS…GKQLDAKTLR (91 aa)) are disordered. Positions 97 to 109 (SSKSGGESSDSGS) are enriched in low complexity. Polar residues predominate over residues 110 to 126 (ANFSGKAESQQPESPMS). The segment covering 143–155 (SSSTSGLPSTSRT) has biased composition (low complexity). Residues 165 to 172 (KRKATTSG) carry the Nuclear localization signal motif. The bZIP domain maps to 176–220 (DAKTLRRLAQNREAARKSRLRKKAYVQQLESSRIKLSQLEQELQR). Positions 178-198 (KTLRRLAQNREAARKSRLRKK) are basic motif. Positions 204-218 (LESSRIKLSQLEQEL) are leucine-zipper. Residues 242–450 (AAIFDMEYGR…RALSSLWLSR (209 aa)) enclose the DOG1 domain.

This sequence belongs to the bZIP family. Homodimer. Binds DNA as a dimer. Interacts with floral glutaredoxins GRXC7/ROXY1 and GRXC8/ROXY2 in the nucleus. Interacts with TGA1, TGA2, TGA3, TGA4, TGA5, TGA6, TGA7, TGA10 and PAN. In terms of tissue distribution, mostly expressed in stems, inflorescence apex and flowers, and, to a lower extent, in seedlings, leaves and siliques.

The protein resides in the nucleus. Together with TGA10, basic leucine-zipper transcription factor required for anther development, probably via the activation of SPL expression in anthers and via the regulation of genes with functions in early and middle tapetal development. Required for signaling responses to pathogen-associated molecular patterns (PAMPs) such as flg22 that involves chloroplastic reactive oxygen species (ROS) production and subsequent expression of H(2)O(2)-responsive genes. The polypeptide is Transcription factor TGA9 (Arabidopsis thaliana (Mouse-ear cress)).